We begin with the raw amino-acid sequence, 288 residues long: Co-chaperone protein DjlA (288 aa).

The Periplasmic segment spans residues 1-6 (MEFIGK). The chain crosses the membrane as a helical span at residues 7-30 (IIGVFLGWKVGGFFGAIAGLILGS). At 31 to 288 (IADKKLYELG…DLICKAKGWK (258 aa)) the chain is on the cytoplasmic side. A J domain is found at 222 to 288 (DAYKVLGVTE…DLICKAKGWK (67 aa)).

Homodimer.

The protein localises to the cell inner membrane. Functionally, regulatory DnaK co-chaperone. Direct interaction between DnaK and DjlA is needed for the induction of the wcaABCDE operon, involved in the synthesis of a colanic acid polysaccharide capsule, possibly through activation of the RcsB/RcsC phosphotransfer signaling pathway. The colanic acid capsule may help the bacterium survive conditions outside the host. This Haemophilus influenzae (strain ATCC 51907 / DSM 11121 / KW20 / Rd) protein is Co-chaperone protein DjlA.